The sequence spans 444 residues: Glycogen synthase (444 aa).

Arg-15 serves as a coordination point for ADP-alpha-D-glucose.

The protein belongs to the glycosyltransferase 1 family. Bacterial/plant glycogen synthase subfamily.

The enzyme catalyses [(1-&gt;4)-alpha-D-glucosyl](n) + ADP-alpha-D-glucose = [(1-&gt;4)-alpha-D-glucosyl](n+1) + ADP + H(+). Its pathway is glycan biosynthesis; glycogen biosynthesis. Its function is as follows. Synthesizes alpha-1,4-glucan chains using ADP-glucose. The sequence is that of Glycogen synthase from Deinococcus radiodurans (strain ATCC 13939 / DSM 20539 / JCM 16871 / CCUG 27074 / LMG 4051 / NBRC 15346 / NCIMB 9279 / VKM B-1422 / R1).